The following is an 809-amino-acid chain: Lon protease (809 aa).

Positions 8–203 constitute a Lon N-terminal domain; the sequence is LPVVALRNMA…RLCLILADEI (196 aa). 354–361 contacts ATP; it reads GPPGTGKT. A Lon proteolytic domain is found at 629-809; sequence KDEVGIVCGL…MDEVLKHALV (181 aa). Residues Ser716 and Lys759 contribute to the active site.

Belongs to the peptidase S16 family. Homohexamer. Organized in a ring with a central cavity.

The protein resides in the cytoplasm. The enzyme catalyses Hydrolysis of proteins in presence of ATP.. In terms of biological role, ATP-dependent serine protease that mediates the selective degradation of mutant and abnormal proteins as well as certain short-lived regulatory proteins. Required for cellular homeostasis and for survival from DNA damage and developmental changes induced by stress. Degrades polypeptides processively to yield small peptide fragments that are 5 to 10 amino acids long. Binds to DNA in a double-stranded, site-specific manner. This is Lon protease from Lachnoclostridium phytofermentans (strain ATCC 700394 / DSM 18823 / ISDg) (Clostridium phytofermentans).